The chain runs to 560 residues: Dihydroxy-acid dehydratase (560 aa).

Residue Cys-50 coordinates [2Fe-2S] cluster. Asp-82 lines the Mg(2+) pocket. Cys-123 lines the [2Fe-2S] cluster pocket. Residues Asp-124 and Lys-125 each coordinate Mg(2+). N6-carboxylysine is present on Lys-125. Position 195 (Cys-195) interacts with [2Fe-2S] cluster. Glu-447 is a binding site for Mg(2+). Ser-473 serves as the catalytic Proton acceptor.

Belongs to the IlvD/Edd family. In terms of assembly, homodimer. [2Fe-2S] cluster serves as cofactor. It depends on Mg(2+) as a cofactor.

It carries out the reaction (2R)-2,3-dihydroxy-3-methylbutanoate = 3-methyl-2-oxobutanoate + H2O. It catalyses the reaction (2R,3R)-2,3-dihydroxy-3-methylpentanoate = (S)-3-methyl-2-oxopentanoate + H2O. It functions in the pathway amino-acid biosynthesis; L-isoleucine biosynthesis; L-isoleucine from 2-oxobutanoate: step 3/4. The protein operates within amino-acid biosynthesis; L-valine biosynthesis; L-valine from pyruvate: step 3/4. In terms of biological role, functions in the biosynthesis of branched-chain amino acids. Catalyzes the dehydration of (2R,3R)-2,3-dihydroxy-3-methylpentanoate (2,3-dihydroxy-3-methylvalerate) into 2-oxo-3-methylpentanoate (2-oxo-3-methylvalerate) and of (2R)-2,3-dihydroxy-3-methylbutanoate (2,3-dihydroxyisovalerate) into 2-oxo-3-methylbutanoate (2-oxoisovalerate), the penultimate precursor to L-isoleucine and L-valine, respectively. This Methylibium petroleiphilum (strain ATCC BAA-1232 / LMG 22953 / PM1) protein is Dihydroxy-acid dehydratase.